Reading from the N-terminus, the 506-residue chain is MFSLQDLCRKNLFLPLEPLGKHVVQRLGLYWEGHGSVKRVGDCFICVDQIWILSIHKAVQIAASEGNEDIVKLFLLWKGSLQYAIIGALEGRQYDLIQKYYNQIGDCHQILPLIQDPEIYERCHELNVTCTFQCLFQHAIRDNMLPIFQKYGEDLNGNRGMVQLLYEMACRLQNYDIIKWIGFNLHVYNLEAIFSIAFVRKDLTLYSLGYMLLLDRMSTVDRNFISIITRHLEYASKKGLFDFVLESLKYGGQVDTVLFQAVKYNHRKILAHFIHEIPRETVEKLILHAVESRASRKTFNLLLSSINYCVNPFVKKLLHAVVKHKYMLIIKLLLERPKKKINLVDAALFKLVKYSTYKEIVKYMDEFSVDPKRVVKMAARLMRVDLIKKISNDAWEDKLERIKHLKQMVNTMNHRNGKNLLMYNIHNITGYTHLNTKEAFNLTKFYAVHNATCLFKEMCKSCFEHDKIQLRELLEDCLHIANRHAYIQIAETADECIKYIDLITPK.

This sequence belongs to the asfivirus MGF 505 family.

Functionally, plays a role in virus cell tropism, and may be required for efficient virus replication in macrophages. The sequence is that of Protein MGF 505-9R from African swine fever virus (isolate Tick/South Africa/Pretoriuskop Pr4/1996) (ASFV).